The following is a 2151-amino-acid chain: Calpain-type cysteine protease DEK1 (2151 aa).

A signal peptide spans 1-32 (MEGDERGVLLACVISGTLFTVFGSGSFWILWA). Over 33-69 (VNWRPWRLYSWIFARKWPKVLQGPQLDILCGVLSLFA) the chain is Extracellular. A helical membrane pass occupies residues 70 to 90 (WIVVVSPIAILIGWGSWLIVI). The Cytoplasmic segment spans residues 91 to 94 (LDRH). A helical transmembrane segment spans residues 95 to 115 (IIGLAIIMAGTALLLAFYSIM). Topologically, residues 116–126 (LWWRTQWQSSR) are extracellular. A helical transmembrane segment spans residues 127–147 (AVALLLLLGVALLCAYELCAV). Over 148-163 (YVTAGAHASQQYSPSG) the chain is Cytoplasmic. Residues 164-184 (FFFGVSAIALAINMLFICRMV) form a helical membrane-spanning segment. At 185-235 (FNGNGLDVDEYVRRAYKFAYSDCIEVGPVACLPEPPDPNELYPRQTSRASH) the chain is on the extracellular side. The chain crosses the membrane as a helical span at residues 236-256 (LGLLYLGSLVVLLAYSVLYGL). Topologically, residues 257-263 (TARESRW) are cytoplasmic. The chain crosses the membrane as a helical span at residues 264 to 284 (LGGITSAAVIVLDWNIGACLY). Topologically, residues 285 to 293 (GFKLLQNRV) are extracellular. A helical membrane pass occupies residues 294 to 314 (LALFVAGISRLFLICFGIHYW). Residues 315-319 (YLGHC) lie on the Cytoplasmic side of the membrane. The helical transmembrane segment at 320–340 (ISYIFVASVLSGAAVSRHLSI) threads the bilayer. The Extracellular portion of the chain corresponds to 341 to 615 (TDPSAARRDA…LLLHHVAGTP (275 aa)). Disordered stretches follow at residues 363 to 393 (RRKE…GHTG) and 405 to 442 (CTAD…SCRS). Over residues 369 to 388 (SSSSSSDGCGSSIKRSSSID) the composition is skewed to low complexity. The segment covering 405–420 (CTADNLTRTGSSQEGI) has biased composition (polar residues). Residues 430 to 442 (RPSLGLRSSSCRS) show a composition bias toward low complexity. Residues 616 to 636 (ERAWGLFSLVFILETIIVAIF) form a helical membrane-spanning segment. Over 637–652 (RPKTITIINSSHQQFE) the chain is Cytoplasmic. A helical membrane pass occupies residues 653-673 (FGFSVLLLSPVVCSIMAFLRS). The Extracellular segment spans residues 674 to 686 (LQVEEMALTSKSR). Residues 687–707 (KYGFVAWLLSTSVGLSLSFLS) traverse the membrane as a helical segment. At 708–711 (KSSV) the chain is on the cytoplasmic side. A helical transmembrane segment spans residues 712–732 (LLGISLTVPLMAACLSIAVPI). Residues 733-760 (WMHNGYQFWVPQLSCGDQARDLRSPRIK) are Extracellular-facing. The helical transmembrane segment at 761-782 (GFILWICVVLFAGSVISLGAII) threads the bilayer. Residues 783–813 (SAKPLDDLKYKLFSARENNVTSPYTSSVYLG) lie on the Cytoplasmic side of the membrane. A helical membrane pass occupies residues 814-834 (WAMSSGIALVVTAILPIVSWF). Over 835–844 (ATYRFSHSSA) the chain is Extracellular. Residues 845–865 (VCLMIFSVVLVAFCGTSYLEV) form a helical membrane-spanning segment. Over 866–878 (VKSRDDQLPTKGD) the chain is Cytoplasmic. Residues 879–899 (FLAALLPLACIPALLSLCCGM) form a helical membrane-spanning segment. Residues 900–912 (VKWKDDCWILSRG) lie on the Extracellular side of the membrane. A helical membrane pass occupies residues 913 to 933 (VYVFFSIGLLLLFGAIAAVIA). Topologically, residues 934–936 (VKP) are cytoplasmic. A helical transmembrane segment spans residues 937 to 957 (WTIGVSFLLVLFLMVVTIGVI). Topologically, residues 958–971 (HLWASNNFYLTRKQ) are extracellular. The chain crosses the membrane as a helical span at residues 972-992 (TSFVCFLALLLGLAAFLLGWH). The Cytoplasmic portion of the chain corresponds to 993–1006 (QDKAFAGASVGYFT). The helical transmembrane segment at 1007 to 1027 (FLSLLAGRALAVLLSPPIVVY) threads the bilayer. At 1028-1050 (SPRVLPVYVYDAHADCGKNVSAA) the chain is on the extracellular side. The chain crosses the membrane as a helical span at residues 1051–1071 (FLVLYGIALATEGWGVVASLI). The Cytoplasmic portion of the chain corresponds to 1072–2151 (IYPPFAGAAV…TKASIVLEAL (1080 aa)). 2 consecutive Calpain catalytic domains span residues 1407 to 1600 (SGKH…DMID) and 1695 to 1997 (QFTD…CRVY). Residues cysteine 1761, histidine 1919, and asparagine 1939 contribute to the active site.

This sequence belongs to the peptidase C2 family. Autocatalytic proteolytic cleavage leading to the production of mainly cytoplasmic localized subproducts of about 85 and 120 kDa. In terms of tissue distribution, mostly expressed in meristems and organ primordia. Expressed at low levels in young and germinating seeds at 10 ppm and in seedling roots at 67 ppm. Present in most tissues at a low level.

The protein resides in the cell membrane. Its subcellular location is the endosome membrane. It localises to the endoplasmic reticulum membrane. The protein localises to the cytoplasm. In terms of biological role, essential protease involved in epiderm development. Required for aleurone cell development in the endosperm probably by maintaining and restricting the aleurone and embryonic epidermal L1 cell-layer fates as well as meristems organization. Involved in the maintenance of adaxial/abaxial axis information in developing leaves, probably by regulating cell proliferation and expansion. Does not need calcium ions to be active. Required for the formation of giant cells in sepals by determining cell fate and promoting endoreplication. This Arabidopsis thaliana (Mouse-ear cress) protein is Calpain-type cysteine protease DEK1.